Here is a 213-residue protein sequence, read N- to C-terminus: Protein nullo (213 aa).

As to expression, blastoderm. Throughout the entire cortex of the embryo although the distribution is not uniform.

Functionally, actin-myosin network stability during cellularization. Might be involved in increasing actin-actin interactions or membrane-to-cytoskeleton attachments. nullo together with Sry-a and bnk may provide auxiliary functions, by acting both to stabilize a large and dynamic microfilament structure and regulate its functions. This chain is Protein nullo (nullo), found in Drosophila melanogaster (Fruit fly).